The sequence spans 188 residues: Ion-translocating oxidoreductase complex subunit B (188 aa).

The hydrophobic stretch occupies residues 1–26 (MNGVFLAIGALLPICLAGGALLGYAA). Residues 32–90 (QGDPVAEQVNALLPQTQCGQCGYPGCKPYAEAIAAGDKINKCPPGGEATIRALADLLDL) form the 4Fe-4S domain. [4Fe-4S] cluster-binding residues include C49, C52, C57, C73, C113, C116, C119, C123, C143, C146, C149, and C153. 4Fe-4S ferredoxin-type domains lie at 104–133 (RVAY…GAAR) and 134–163 (LMHT…MREI).

This sequence belongs to the 4Fe4S bacterial-type ferredoxin family. RnfB subfamily. In terms of assembly, the complex is composed of six subunits: RnfA, RnfB, RnfC, RnfD, RnfE and RnfG. [4Fe-4S] cluster is required as a cofactor.

The protein localises to the cell inner membrane. Its function is as follows. Part of a membrane-bound complex that couples electron transfer with translocation of ions across the membrane. This Pseudomonas aeruginosa (strain LESB58) protein is Ion-translocating oxidoreductase complex subunit B.